The chain runs to 119 residues: Large ribosomal subunit protein uL18 (119 aa).

It belongs to the universal ribosomal protein uL18 family. In terms of assembly, part of the 50S ribosomal subunit; part of the 5S rRNA/L5/L18/L25 subcomplex. Contacts the 5S and 23S rRNAs.

This is one of the proteins that bind and probably mediate the attachment of the 5S RNA into the large ribosomal subunit, where it forms part of the central protuberance. The protein is Large ribosomal subunit protein uL18 of Staphylococcus aureus (strain bovine RF122 / ET3-1).